A 403-amino-acid chain; its full sequence is Alkaline protease 1 (403 aa).

The first 21 residues, 1–21 (MHSFKRSLLLLGALLPAVFGA), serve as a signal peptide directing secretion. Residues 22 to 124 (PVEPRRAAEK…QIWYIDALTS (103 aa)) constitute a propeptide that is removed on maturation. Residues 35–119 (KYIVTFKSGL…HVEEDQIWYI (85 aa)) enclose the Inhibitor I9 domain. The 275-residue stretch at 129-403 (PWGLGAISHK…NLLAYNGADE (275 aa)) folds into the Peptidase S8 domain. Residues Asp-161 and His-192 each act as charge relay system in the active site. Asn-252 carries an N-linked (GlcNAc...) asparagine glycan. The active-site Charge relay system is Ser-348.

This sequence belongs to the peptidase S8 family.

Its subcellular location is the secreted. The catalysed reaction is Hydrolysis of proteins with broad specificity, and of Bz-Arg-OEt &gt; Ac-Tyr-OEt. Does not hydrolyze peptide amides.. Functionally, secreted alkaline protease that allows assimilation of proteinaceous substrates. The protein is Alkaline protease 1 (alp1) of Emericella nidulans (strain FGSC A4 / ATCC 38163 / CBS 112.46 / NRRL 194 / M139) (Aspergillus nidulans).